Reading from the N-terminus, the 130-residue chain is NADH-quinone oxidoreductase subunit A (130 aa).

The next 3 membrane-spanning stretches (helical) occupy residues 17 to 37 (YIFV…MLAL), 74 to 94 (LVGI…PWAV), and 99 to 119 (LGPA…VGFV).

The protein belongs to the complex I subunit 3 family. NDH-1 is composed of 14 different subunits. Subunits NuoA, H, J, K, L, M, N constitute the membrane sector of the complex.

Its subcellular location is the cell inner membrane. The enzyme catalyses a quinone + NADH + 5 H(+)(in) = a quinol + NAD(+) + 4 H(+)(out). Functionally, NDH-1 shuttles electrons from NADH, via FMN and iron-sulfur (Fe-S) centers, to quinones in the respiratory chain. The immediate electron acceptor for the enzyme in this species is believed to be ubiquinone. Couples the redox reaction to proton translocation (for every two electrons transferred, four hydrogen ions are translocated across the cytoplasmic membrane), and thus conserves the redox energy in a proton gradient. This chain is NADH-quinone oxidoreductase subunit A, found in Neorickettsia sennetsu (strain ATCC VR-367 / Miyayama) (Ehrlichia sennetsu).